A 250-amino-acid polypeptide reads, in one-letter code: Imidazole glycerol phosphate synthase subunit HisF (250 aa).

Residues Asp11 and Asp130 contribute to the active site.

Belongs to the HisA/HisF family. As to quaternary structure, heterodimer of HisH and HisF.

It localises to the cytoplasm. The enzyme catalyses 5-[(5-phospho-1-deoxy-D-ribulos-1-ylimino)methylamino]-1-(5-phospho-beta-D-ribosyl)imidazole-4-carboxamide + L-glutamine = D-erythro-1-(imidazol-4-yl)glycerol 3-phosphate + 5-amino-1-(5-phospho-beta-D-ribosyl)imidazole-4-carboxamide + L-glutamate + H(+). It functions in the pathway amino-acid biosynthesis; L-histidine biosynthesis; L-histidine from 5-phospho-alpha-D-ribose 1-diphosphate: step 5/9. IGPS catalyzes the conversion of PRFAR and glutamine to IGP, AICAR and glutamate. The HisF subunit catalyzes the cyclization activity that produces IGP and AICAR from PRFAR using the ammonia provided by the HisH subunit. This chain is Imidazole glycerol phosphate synthase subunit HisF, found in Elusimicrobium minutum (strain Pei191).